The sequence spans 156 residues: Beta-defensin 125 (156 aa).

The first 20 residues, Met1–Gly20, serve as a signal peptide directing secretion. Disulfide bonds link Cys27/Cys55, Cys35/Cys49, and Cys39/Cys56. A propeptide spanning residues Pro68 to Asn156 is cleaved from the precursor. Residues Gly108–Asn156 form a disordered region. A compositionally biased stretch (low complexity) spans Glu109 to Thr144.

This sequence belongs to the beta-defensin family.

The protein resides in the secreted. Has antibacterial activity. This Homo sapiens (Human) protein is Beta-defensin 125 (DEFB125).